Here is a 245-residue protein sequence, read N- to C-terminus: Eukaryotic translation initiation factor 6 (245 aa).

It belongs to the eIF-6 family. Monomer. Associates with the 60S ribosomal subunit.

The protein resides in the cytoplasm. Its subcellular location is the nucleus. The protein localises to the nucleolus. Binds to the 60S ribosomal subunit and prevents its association with the 40S ribosomal subunit to form the 80S initiation complex in the cytoplasm. May also be involved in ribosome biogenesis. The polypeptide is Eukaryotic translation initiation factor 6 (eif6) (Xenopus laevis (African clawed frog)).